Consider the following 443-residue polypeptide: D(2) dopamine receptor (443 aa).

Over 1–37 (MDPLNLSWYDDDLERQNWSRPFNGSDGKADRPHYNYY) the chain is Extracellular. Residues Asn-5, Asn-17, and Asn-23 are each glycosylated (N-linked (GlcNAc...) asparagine). A helical membrane pass occupies residues 38 to 60 (ATLLTLLIAVIVFGNVLVCMAVS). The Cytoplasmic segment spans residues 61–70 (REKALQTTTN). Residues 71–93 (YLIVSLAVADLLVATLVMPWVVY) traverse the membrane as a helical segment. The Extracellular portion of the chain corresponds to 94 to 108 (LEVVGEWKFSKIHCD). An intrachain disulfide couples Cys-107 to Cys-182. Residues 109-130 (IFVTLDVMMCTASILNLCAISI) form a helical membrane-spanning segment. Residues 131 to 151 (DRYTAVAMPMLYNTRYSSKRR) are Cytoplasmic-facing. Residues 152 to 172 (VTVMIAIVWVLSFTISCPLLF) form a helical membrane-spanning segment. Residues 173-188 (GLNNADQNECIIANPA) lie on the Extracellular side of the membrane. Residues 189 to 213 (FVVYSSIVSFYVPFIVTLLVYIKIY) traverse the membrane as a helical segment. Positions 211-373 (KIYIVLRRRR…SQQKEKKATQ (163 aa)) are interaction with PPP1R9B. At 214–373 (IVLRRRRKRV…SQQKEKKATQ (160 aa)) the chain is on the cytoplasmic side. The tract at residues 281–332 (MEMLSSTSPPERTRYSPIPPSHHQLTLPDPSHHGLHSTPDSPAKPEKNGHAK) is disordered. The helical transmembrane segment at 374–395 (MLAIVLGVFIICWLPFFITHIL) threads the bilayer. Residues 396–409 (NIHCDCNIPPVLYS) lie on the Extracellular side of the membrane. Residues Cys-399 and Cys-401 are joined by a disulfide bond. A helical membrane pass occupies residues 410–431 (AFTWLGYVNSAVNPIIYTTFNI). Over 432–443 (EFRKAFLKILHC) the chain is Cytoplasmic. Residue Cys-443 is the site of S-palmitoyl cysteine attachment.

It belongs to the G-protein coupled receptor 1 family. In terms of assembly, forms homo- and heterooligomers with DRD4. The interaction with DRD4 may modulate agonist-induced downstream signaling. Interacts with CADPS and CADPS2. Interacts with GPRASP1, PPP1R9B and CLIC6. Interacts with ARRB2. Interacts with HTR2A. Interacts with DRD1. Interacts with KCNA2. Palmitoylated. Palmitoylation which is required for proper localization to the plasma membrane and stability of the receptor could be carried on by ZDHHC4, ZDHHC3 and ZDHHC8.

It localises to the cell membrane. Its subcellular location is the golgi apparatus membrane. Functionally, dopamine receptor whose activity is mediated by G proteins which inhibit adenylyl cyclase. Positively regulates postnatal regression of retinal hyaloid vessels via suppression of VEGFR2/KDR activity, downstream of OPN5. This is D(2) dopamine receptor (DRD2) from Chlorocebus aethiops (Green monkey).